We begin with the raw amino-acid sequence, 144 residues long: Large ribosomal subunit protein uL11 (144 aa).

Belongs to the universal ribosomal protein uL11 family. As to quaternary structure, part of the ribosomal stalk of the 50S ribosomal subunit. Interacts with L10 and the large rRNA to form the base of the stalk. L10 forms an elongated spine to which L12 dimers bind in a sequential fashion forming a multimeric L10(L12)X complex. Post-translationally, one or more lysine residues are methylated.

Its function is as follows. Forms part of the ribosomal stalk which helps the ribosome interact with GTP-bound translation factors. This Deinococcus geothermalis (strain DSM 11300 / CIP 105573 / AG-3a) protein is Large ribosomal subunit protein uL11.